The chain runs to 338 residues: MSFIDEVKIHVKSGDGGPGCVSFRHEKFIEFGGPDGGDGGKGGNVIVEASRNLSTLLDLRQHPHQKAGSGKNGMGKDRHGAYGKDLRLLLPVGTVIKDAETDEVLADLTEPGQPLVLLKGGRGGQGNARFATATHKAPRFAQPGEPGEERWLRLELKLMADVGLLGMPSVGKSSLITKVSAARPKIAEYHFTTLKPNLGVVAYKNYKSFVMADIPGLIEGAHEGAGLGHRFLKHLERTGHLLHILDISWMPDRDPIREYEAINKELSLFNPELAEKKQTIVINKMDLPVVKENLAKVLPYFQERGLKVFPISAATGEGIPALLDEIARQLWGAAEEEW.

The Obg domain maps to 1–159; it reads MSFIDEVKIH…RWLRLELKLM (159 aa). One can recognise an OBG-type G domain in the interval 160-331; the sequence is ADVGLLGMPS…LLDEIARQLW (172 aa). GTP-binding positions include 166–173, 191–195, 213–216, 283–286, and 312–314; these read GMPSVGKS, FTTLK, DIPG, NKMD, and SAA. Positions 173 and 193 each coordinate Mg(2+).

Belongs to the TRAFAC class OBG-HflX-like GTPase superfamily. OBG GTPase family. Monomer. Mg(2+) serves as cofactor.

The protein localises to the cytoplasm. Functionally, an essential GTPase which binds GTP, GDP and possibly (p)ppGpp with moderate affinity, with high nucleotide exchange rates and a fairly low GTP hydrolysis rate. Plays a role in control of the cell cycle, stress response, ribosome biogenesis and in those bacteria that undergo differentiation, in morphogenesis control. The protein is GTPase Obg of Geotalea daltonii (strain DSM 22248 / JCM 15807 / FRC-32) (Geobacter daltonii).